Reading from the N-terminus, the 101-residue chain is Large ribosomal subunit protein uL23 (101 aa).

Belongs to the universal ribosomal protein uL23 family. As to quaternary structure, part of the 50S ribosomal subunit. Contacts protein L29, and trigger factor when it is bound to the ribosome.

Functionally, one of the early assembly proteins it binds 23S rRNA. One of the proteins that surrounds the polypeptide exit tunnel on the outside of the ribosome. Forms the main docking site for trigger factor binding to the ribosome. The protein is Large ribosomal subunit protein uL23 of Synechocystis sp. (strain ATCC 27184 / PCC 6803 / Kazusa).